The sequence spans 140 residues: Lymphocyte antigen 6 complex locus protein G5c (140 aa).

Residues 1 to 41 form the signal peptide; that stretch reads MRFMAGPAGSQNPGPMCFHSSLQALYTVLLIVLVMMSLVFG. The UPAR/Ly6 domain occupies 60 to 140; that stretch reads LRCYRCLLET…SQCCFLGFLQ (81 aa). Intrachain disulfides connect C62–C89, C65–C74, C81–C107, and C116–C133. A glycan (N-linked (GlcNAc...) asparagine) is linked at N96.

Forms oligomers. Post-translationally, N-glycosylated.

It is found in the secreted. May have a role in hematopoietic cell differentiation. This Macaca mulatta (Rhesus macaque) protein is Lymphocyte antigen 6 complex locus protein G5c (LY6G5C).